The chain runs to 265 residues: Proline-rich protein 23B (265 aa).

The span at 1–18 (MVSRPRSPSAFPAPWWGQ) shows a compositional bias: low complexity. Disordered stretches follow at residues 1-49 (MVSR…EDPA) and 226-265 (PSSP…LFQA). The span at 226-237 (PSSPLQPLPPSP) shows a compositional bias: pro residues. Positions 256-265 (CKARRRLFQA) are enriched in basic residues.

Belongs to the PRR23 family.

In Homo sapiens (Human), this protein is Proline-rich protein 23B (PRR23B).